The chain runs to 110 residues: Large ribosomal subunit protein uL24 (110 aa).

It belongs to the universal ribosomal protein uL24 family. Part of the 50S ribosomal subunit.

Its function is as follows. One of two assembly initiator proteins, it binds directly to the 5'-end of the 23S rRNA, where it nucleates assembly of the 50S subunit. In terms of biological role, one of the proteins that surrounds the polypeptide exit tunnel on the outside of the subunit. The protein is Large ribosomal subunit protein uL24 of Desulfovibrio desulfuricans (strain ATCC 27774 / DSM 6949 / MB).